The following is a 339-amino-acid chain: DNA-directed RNA polymerase subunit alpha (339 aa).

Positions 1–235 (MVIQKNWQEL…DQLQVFVNFE (235 aa)) are alpha N-terminal domain (alpha-NTD). The tract at residues 251-339 (FNPALLKKVD…DLAKRFEEHY (89 aa)) is alpha C-terminal domain (alpha-CTD).

The protein belongs to the RNA polymerase alpha chain family. As to quaternary structure, homodimer. The RNAP catalytic core consists of 2 alpha, 1 beta, 1 beta' and 1 omega subunit. When a sigma factor is associated with the core the holoenzyme is formed, which can initiate transcription.

It carries out the reaction RNA(n) + a ribonucleoside 5'-triphosphate = RNA(n+1) + diphosphate. Functionally, DNA-dependent RNA polymerase catalyzes the transcription of DNA into RNA using the four ribonucleoside triphosphates as substrates. This Methylobacterium radiotolerans (strain ATCC 27329 / DSM 1819 / JCM 2831 / NBRC 15690 / NCIMB 10815 / 0-1) protein is DNA-directed RNA polymerase subunit alpha.